Consider the following 459-residue polypeptide: MGVVKGLLALALVLNVVVVSNGGKSSNFVRKTNKNRDMPLDSDVFRVPPGYNAPQQVHITQGDLVGRAMIISWVTMDEPGSSAVRYWSEKNGRKRIAKGKMSTYRFFNYSSGFIHHTTIRKLKYNTKYYYEVGLRNTTRRFSFITPPQTGLDVPYTFGLIGDLGQSFDSNTTLSHYELSPKKGQTVLFVGDLSYADRYPNHDNVRWDTWGRFTERSVAYQPWIWTAGNHEIEFAPEINETEPFKPFSYRYHVPYEASQSTSPFWYSIKRASAHIIVLSSYSAYGRGTPQYTWLKKELRKVKRSETPWLIVLMHSPLYNSYNHHFMEGEAMRTKFEAWFVKYKVDVVFAGHVHAYERSERVSNIAYKITNGLCTPVKDQSAPVYITIGDAGNYGVIDSNMIQPQPEYSAFREASFGHGMFDIKNRTHAHFSWNRNQDGVAVEADSVWFFNRHWYPVDDST.

The signal sequence occupies residues 1–22 (MGVVKGLLALALVLNVVVVSNG). Glycine 23 is subject to Blocked amino end (Gly). Asparagine 108 carries an N-linked (GlcNAc...) asparagine; partial glycan. Asparagine 136 carries an N-linked (GlcNAc...) asparagine glycan. Aspartate 162 lines the Fe cation pocket. Residue asparagine 170 is glycosylated (N-linked (GlcNAc...) asparagine). Residues aspartate 191 and tyrosine 194 each contribute to the Fe cation site. Aspartate 191 is a binding site for Zn(2+). Asparagine 228 contacts Zn(2+). Asparagine 238 is a glycosylation site (N-linked (GlcNAc...) asparagine). Position 313 (histidine 313) interacts with Zn(2+). The active-site Proton donor is histidine 323. Histidine 350 serves as a coordination point for Zn(2+). Histidine 352 contacts Fe cation. N-linked (GlcNAc...) asparagine glycosylation is present at asparagine 423.

The protein belongs to the metallophosphoesterase superfamily. Purple acid phosphatase family. In terms of assembly, homodimer; disulfide-linked. Fe cation serves as cofactor. It depends on Zn(2+) as a cofactor.

Its subcellular location is the secreted. The catalysed reaction is a phosphate monoester + H2O = an alcohol + phosphate. Its activity is regulated as follows. Inhibited by compounds CC24201, CC27209, and MO07123. Inhibited by the tetraoxoanions molybdate and phosphate. Not inhibited by EDTA or tartrate. This Phaseolus vulgaris (Kidney bean) protein is Fe(3+)-Zn(2+) purple acid phosphatase.